The sequence spans 216 residues: Adenylate kinase (216 aa).

Residue 10-15 (GAGKGT) participates in ATP binding. An NMP region spans residues 30–59 (STGDIFRAHMSQGTPLGKLAKEYVDAGKYV). AMP contacts are provided by residues Thr31, Arg36, 57–59 (KYV), 85–88 (GYPR), and Gln92. The LID stretch occupies residues 126 to 163 (GRRVCRSCGATYHVRFNPPREAGRCDRCGGELYQRSDD). Position 127 (Arg127) interacts with ATP. Residues Cys130 and Cys133 each contribute to the Zn(2+) site. 136 to 137 (TY) lines the ATP pocket. Zn(2+) contacts are provided by Cys150 and Cys153. Residues Arg160 and Arg171 each coordinate AMP. Residue Gln199 participates in ATP binding.

This sequence belongs to the adenylate kinase family. As to quaternary structure, monomer.

The protein resides in the cytoplasm. The catalysed reaction is AMP + ATP = 2 ADP. Its pathway is purine metabolism; AMP biosynthesis via salvage pathway; AMP from ADP: step 1/1. Catalyzes the reversible transfer of the terminal phosphate group between ATP and AMP. Plays an important role in cellular energy homeostasis and in adenine nucleotide metabolism. The sequence is that of Adenylate kinase from Symbiobacterium thermophilum (strain DSM 24528 / JCM 14929 / IAM 14863 / T).